Consider the following 470-residue polypeptide: Solute carrier family 7 member 13 (470 aa).

At 1–11 (MDRGEKIQLKR) the chain is on the cytoplasmic side. Residues 12-32 (VFGYWWGTSFLLINIIGAGIF) traverse the membrane as a helical segment. At 33–45 (VSPKGVLAYSCMN) the chain is on the extracellular side. Residues 46–66 (VGVSLCVWAGCAILAMTSTLC) form a helical membrane-spanning segment. The Cytoplasmic portion of the chain corresponds to 67–87 (SAEISISFPCSGAQYYFLKRY). Residues 88–108 (FGSTVAFLNLWTSLFLGSGVV) traverse the membrane as a helical segment. Residues 109–128 (AGQALLLAEYSIQPFFPSCS) are Extracellular-facing. Residues 129 to 149 (VPKLPKKCLALAMLWIVGILT) traverse the membrane as a helical segment. Residues 150 to 162 (SRGVKEVTWLQIA) are Cytoplasmic-facing. The chain crosses the membrane as a helical span at residues 163–183 (SSVLKVSILSFISLTGVVFLI). Residues 184 to 206 (RGKKENVERFQNAFDAELPDISH) are Extracellular-facing. Residues 207–227 (LIQAIFQGYFAYSGGACFTLI) traverse the membrane as a helical segment. At 228-240 (AGELKKPRTTIPK) the chain is on the cytoplasmic side. Residues 241–261 (CIFTALPLVTVVYLLVNISYL) traverse the membrane as a helical segment. Topologically, residues 262–287 (TVLTPREILSSDAVAITWADRAFPSL) are extracellular. Residues 288-308 (AWIMPFAISTSLFSNLLISIF) form a helical membrane-spanning segment. Over 309 to 336 (KSSRPIYLASQEGQLPLLFNTLNSHSSP) the chain is Cytoplasmic. Residues 337–357 (FTAVLLLVTLGSLAIILTSLI) traverse the membrane as a helical segment. Asp-358 is a topological domain (extracellular). The chain crosses the membrane as a helical span at residues 359-379 (LINYIFFTGSLWSILLMIGIL). At 380–393 (RRRYQEPNLSIPYK) the chain is on the cytoplasmic side. Residues 394–414 (VFLSFPLATIVIDVGLVVIPL) form a helical membrane-spanning segment. The Extracellular portion of the chain corresponds to 415–421 (VKSPNVH). Residues 422 to 442 (YVYVLLLVLSGLLFYIPLIHF) traverse the membrane as a helical segment. Topologically, residues 443–470 (KIRLAWFEKMTCYLQLLFNICLPDVSEE) are cytoplasmic.

This sequence belongs to the amino acid-polyamine-organocation (APC) superfamily. In terms of assembly, disulfide-linked heterodimer composed of the catalytic light subunit SLC7A13 and the heavy subunit SLC3A1. In terms of tissue distribution, expressed in the kidney.

It localises to the apical cell membrane. It carries out the reaction L-cystine(out) + L-aspartate(in) = L-cystine(in) + L-aspartate(out). The enzyme catalyses L-cystine(out) = L-cystine(in). The catalysed reaction is L-aspartate(in) + L-glutamate(out) = L-aspartate(out) + L-glutamate(in). It catalyses the reaction L-aspartate(in) + L-glutamine(out) = L-aspartate(out) + L-glutamine(in). It carries out the reaction L-aspartate(in) + L-methionine(out) = L-aspartate(out) + L-methionine(in). The enzyme catalyses L-leucine(out) + L-aspartate(in) = L-leucine(in) + L-aspartate(out). The catalysed reaction is L-valine(out) + L-aspartate(in) = L-valine(in) + L-aspartate(out). It catalyses the reaction L-aspartate(in) + L-phenylalanine(out) = L-aspartate(out) + L-phenylalanine(in). It carries out the reaction L-tyrosine(out) + L-aspartate(in) = L-tyrosine(in) + L-aspartate(out). The enzyme catalyses L-tryptophan(out) + L-aspartate(in) = L-tryptophan(in) + L-aspartate(out). Functionally, associates with SLC3A1/rBAT to form a functional heterodimeric complex that transports anionic and neutral amino acids across the apical plasma membrane of renal epithelium. Preferentially mediates exchange transport, but can also operate via facilitated diffusion. May act as a major transporter for L-cystine in late proximal tubules, ensuring its reabsorption from the luminal fluid in exchange for cytosolic L-glutamate or L-aspartate. In Homo sapiens (Human), this protein is Solute carrier family 7 member 13 (SLC7A13).